Reading from the N-terminus, the 675-residue chain is Secretogranin-1 (675 aa).

Positions 1-20 are cleaved as a signal peptide; sequence MQRAMLLGLLGAAALAAVIS. The cysteines at positions 36 and 57 are disulfide-linked. Residues 64–90 show a composition bias toward basic and acidic residues; that stretch reads SGKEVKGEEKGENENSKFEVRLLRDPS. 2 disordered regions span residues 64-507 and 528-555; these read SGKE…YPTT and NSDF…VTMT. A phosphoserine mark is found at S93, S99, S100, S129, and S147. O-linked (Xyl...) (chondroitin sulfate) serine glycosylation is present at S93. 2 stretches are compositionally biased toward basic and acidic residues: residues 148-161 and 168-248; these read KEAK…RGGK and GKIY…KPQE. S190 carries the phosphoserine modification. S236 carries an O-linked (Xyl...) (chondroitin sulfate) serine glycan. Residues 250-269 are compositionally biased toward acidic residues; that stretch reads PDQDQSEEESEEGEEGEEGA. A phosphoserine mark is found at S255, S259, S291, S309, and S333. The segment covering 292 to 311 has biased composition (basic and acidic residues); the sequence is YEGRRPLSEERKHAAGESKD. Y339 is modified (sulfotyrosine). Composition is skewed to basic and acidic residues over residues 361-410 and 429-452; these read GSEE…EGAK and SRQE…DTAK. Phosphoserine occurs at positions 362, 372, 375, and 397. At Y469 the chain carries Sulfotyrosine. Phosphoserine occurs at positions 490, 529, and 540. Position 563 is a sulfotyrosine (Y563). The tract at residues 620-646 is disordered; sequence DFYDSEEQMGPHQEAEDEKDRADQRVL. Sulfotyrosine; partial is present on Y622. Phosphoserine is present on S624. Residues 637–646 show a composition bias toward basic and acidic residues; the sequence is EKDRADQRVL. R674 is subject to Arginine amide; in CCB peptide short form.

It belongs to the chromogranin/secretogranin protein family. Interacts with ITPR1 in the secretory granules. Extensively processed in glucagonoma tissue by limited proteolysis at conserved basic residues. Alternative processing are seen in different tissues. The proglucagon-converting enzymes present in transformed alpha-cells are likely candidates to be involved in tissue-specific processing. In terms of tissue distribution, expressed in the brain, adrenal medulla and anterior pituitary. In the brain, localized to the hippocampal formation, the endocrine hypothalamus, the olfactory system, and in anatomically distinct structures in the pons-medulla.

It localises to the secreted. Functionally, secretogranin-1 is a neuroendocrine secretory granule protein, which may be the precursor for other biologically active peptides. The sequence is that of Secretogranin-1 (Chgb) from Rattus norvegicus (Rat).